The sequence spans 695 residues: Follicle-stimulating hormone receptor (695 aa).

An N-terminal signal peptide occupies residues 1 to 17 (MSLLLVSLLAFLTLGSG). Cystine bridges form between C18/C25 and C23/C32. The region spanning 18 to 46 (CHHRICHCSNGVFLCQESKVTEIPPDLPR) is the LRRNT domain. Residues 18 to 366 (CHHRICHCSN…EDIMGHDILR (349 aa)) lie on the Extracellular side of the membrane. 9 LRR repeats span residues 49–72 (VELRFVLTKLRVIPKGAFSGFGDL), 73–97 (EKIEISQNDVLEVIEANVFSNLPKL), 98–118 (HEIRIEKANNLLYIDPDAFQN), 119–143 (LPNLRYLLISNTGVKHLPAVHKIQS), 144–169 (LQKVLLDIQDNINIHTVERNSFVGLS), 170–192 (FESMILWLSKNGIREIHNCAFNG), 193–216 (TQLDELNLSDNDNLEELPNDVFQG), 217–240 (ASGPVILDISRTRIHSLPSYGLEN), and 241–259 (LKKLRAKSTYNLKKLPSLE). N-linked (GlcNAc...) asparagine glycosylation is found at N191 and N199. Cystine bridges form between C275-C346, C276-C292, C276-C356, and C292-C338. N293 is a glycosylation site (N-linked (GlcNAc...) asparagine). Y335 carries the post-translational modification Sulfotyrosine. The chain crosses the membrane as a helical span at residues 367–387 (VLIWFISILAITGNIIVLVIL). Residues 388 to 398 (ITSQYKLTVPR) are Cytoplasmic-facing. A helical transmembrane segment spans residues 399–421 (FLMCNLAFADLCIGIYLLLIASV). Topologically, residues 422–443 (DIHTKTQYHNYAIDWQTGAGCD) are extracellular. A disulfide bridge connects residues C442 and C517. The chain crosses the membrane as a helical span at residues 444 to 465 (AAGFFTVFASELSVYTLTAITL). Residues 466–485 (ERWHTITHAMQLQCKVQLRH) lie on the Cytoplasmic side of the membrane. The chain crosses the membrane as a helical span at residues 486-508 (AASIMLVGWIFAFTVALFPIFGI). The Extracellular segment spans residues 509–528 (SSYMKVSICLPMDIDSPLSQ). Residues 529–550 (LYVVSLLVLNVLAFVVICGCYT) form a helical membrane-spanning segment. Residues 551–573 (HIYLTVRNPNIMSSSSDTKIAKR) lie on the Cytoplasmic side of the membrane. Residues 574–597 (MAMLIFTDFLCMAPISFFAISASL) traverse the membrane as a helical segment. At 598 to 608 (KVPLITVSKSK) the chain is on the extracellular side. Residues 609–630 (ILLVLFYPINSCANPFLYAIFT) traverse the membrane as a helical segment. Residues 631 to 695 (KNFRRDVFIL…LIPLSRLAQN (65 aa)) are Cytoplasmic-facing.

Belongs to the G-protein coupled receptor 1 family. FSH/LSH/TSH subfamily. In terms of assembly, homotrimer. Functions as a homotrimer binding the FSH hormone heterodimer composed of CGA and FSHB. Interacts with ARRB2. Interacts with APPL2; interaction is independent of follicle stimulating hormone stimulation. Post-translationally, N-glycosylated; indirectly required for FSH-binding, possibly via a conformational change that allows high affinity binding of hormone. Sulfated.

It localises to the cell membrane. In terms of biological role, g protein-coupled receptor for follitropin, the follicle-stimulating hormone. Through cAMP production activates the downstream PI3K-AKT and ERK1/ERK2 signaling pathways. The chain is Follicle-stimulating hormone receptor (FSHR) from Sus scrofa (Pig).